A 429-amino-acid polypeptide reads, in one-letter code: MVNSIHLEPRQHCRGTVTLPGSKSIANRALLMAALCQTPVILHNLLVSDDTSRMREALNALGVSFEDDKLITRVNGLGGGWNKPASELYLGNAGTAMRPLIAVLAATLKNEHQAVVLKGDARMHERPVKHLIDAIQPRGAGVNYLGETGFPPLEMTSGLKPGDFEIDGSVSSQFISALLMALPLLPGDSTLTLKGNVVSRPYIELTLQMLSDFGISIKEDSPQCYAIPGGQCYQSPGEYWVEGDASAASYWMAAALLGKGPVEIIGVGKNSIQGDKRFAEVIEAMGASVSYRKNSMTVSGTGSVQGIDQDFNDIPDAAMTVAPLALFANKPTTIRNVANWRVKETDRLHAMATELRKLGATVDEGEDFLRIEPLKHWRHIAIDTYDDHRMAMCFSLVAFSSAGVTINDPGCCAKTYPDYFSEFSRLCHS.

3-phosphoshikimate-binding residues include lysine 23, serine 24, and arginine 28. Lysine 23 lines the phosphoenolpyruvate pocket. Phosphoenolpyruvate-binding residues include glycine 94 and arginine 126. 3-phosphoshikimate is bound by residues serine 171, serine 172, glutamine 173, serine 199, aspartate 316, asparagine 339, and lysine 343. Residue glutamine 173 participates in phosphoenolpyruvate binding. The Proton acceptor role is filled by aspartate 316. Phosphoenolpyruvate-binding residues include arginine 347, arginine 389, and lysine 414.

The protein belongs to the EPSP synthase family. As to quaternary structure, monomer.

The protein resides in the cytoplasm. It catalyses the reaction 3-phosphoshikimate + phosphoenolpyruvate = 5-O-(1-carboxyvinyl)-3-phosphoshikimate + phosphate. It participates in metabolic intermediate biosynthesis; chorismate biosynthesis; chorismate from D-erythrose 4-phosphate and phosphoenolpyruvate: step 6/7. In terms of biological role, catalyzes the transfer of the enolpyruvyl moiety of phosphoenolpyruvate (PEP) to the 5-hydroxyl of shikimate-3-phosphate (S3P) to produce enolpyruvyl shikimate-3-phosphate and inorganic phosphate. The sequence is that of 3-phosphoshikimate 1-carboxyvinyltransferase from Idiomarina loihiensis (strain ATCC BAA-735 / DSM 15497 / L2-TR).